Reading from the N-terminus, the 462-residue chain is CCA-adding enzyme (462 aa).

Residues serine 54 and arginine 57 each coordinate ATP. Residues serine 54 and arginine 57 each coordinate CTP. The Mg(2+) site is built by aspartate 66, aspartate 68, and aspartate 117. ATP contacts are provided by histidine 140, lysine 160, and tyrosine 169. CTP contacts are provided by histidine 140, lysine 160, and tyrosine 169.

Belongs to the tRNA nucleotidyltransferase/poly(A) polymerase family. Archaeal CCA-adding enzyme subfamily. In terms of assembly, homodimer. The cofactor is Mg(2+).

It carries out the reaction a tRNA precursor + 2 CTP + ATP = a tRNA with a 3' CCA end + 3 diphosphate. The enzyme catalyses a tRNA with a 3' CCA end + 2 CTP + ATP = a tRNA with a 3' CCACCA end + 3 diphosphate. Its function is as follows. Catalyzes the addition and repair of the essential 3'-terminal CCA sequence in tRNAs without using a nucleic acid template. Adds these three nucleotides in the order of C, C, and A to the tRNA nucleotide-73, using CTP and ATP as substrates and producing inorganic pyrophosphate. tRNA 3'-terminal CCA addition is required both for tRNA processing and repair. Also involved in tRNA surveillance by mediating tandem CCA addition to generate a CCACCA at the 3' terminus of unstable tRNAs. While stable tRNAs receive only 3'-terminal CCA, unstable tRNAs are marked with CCACCA and rapidly degraded. The sequence is that of CCA-adding enzyme from Halorubrum lacusprofundi (strain ATCC 49239 / DSM 5036 / JCM 8891 / ACAM 34).